The primary structure comprises 102 residues: uncharacterized protein (102 aa).

The helical transmembrane segment at 5–27 threads the bilayer; it reads IYRSNLVIVITLFVSLSYYHTCF.

It is found in the host membrane. This is an uncharacterized protein from Microplitis demolitor (Parasitoid wasp).